The following is a 582-amino-acid chain: Multicopper oxidase LPR1 homolog 1 (582 aa).

The signal sequence occupies residues 1–20 (MRAKVELAVLLLVLVGVAAG). Cu cation-binding residues include His150, His152, His198, and His200. Residues Asn256, Asn300, and Asn308 are each glycosylated (N-linked (GlcNAc...) asparagine). Residues 285–354 (PFLAVARRRY…DVVVDFSQST (70 aa)) form the Plastocyanin-like domain. Cu cation-binding residues include His467, His470, and His472. Asn504 carries an N-linked (GlcNAc...) asparagine glycan. Residues His563, Cys564, His565, His569, and Met574 each contribute to the Cu cation site.

This sequence belongs to the multicopper oxidase family. The cofactor is Cu cation. As to expression, highly expressed in roots, and at lower levels in basal stems and leaf blades.

It localises to the endoplasmic reticulum membrane. Multicopper oxidase that may play a role in the maintenance of inorganic phosphate homeostasis. This Oryza sativa subsp. japonica (Rice) protein is Multicopper oxidase LPR1 homolog 1.